The following is a 527-amino-acid chain: Butyrophilin subfamily 2 member A1 (527 aa).

The first 28 residues, 1–28 (MESAAALHFSRPASLLLLLLSLCALVSA), serve as a signal peptide directing secretion. The 113-residue stretch at 29-141 (QFIVVGPTDP…SYDEAILHLV (113 aa)) folds into the Ig-like V-type domain. The Extracellular portion of the chain corresponds to 29–248 (QFIVVGPTDP…SFMPSVSPCA (220 aa)). 3 N-linked (GlcNAc...) asparagine glycosylation sites follow: N46, N114, and N120. A disulfide bond links C51 and C125. Residues 249-269 (VALPIIVVILMIPIAVCIYWI) traverse the membrane as a helical segment. Residues 270 to 527 (NKLQKEKKIL…LHRVGTHQSL (258 aa)) are Cytoplasmic-facing. A B30.2/SPRY domain is found at 310-506 (VKEKLQEELR…IFICPALTGA (197 aa)).

The protein belongs to the immunoglobulin superfamily. BTN/MOG family. Highly expressed in brain, bone marrow, small intestine, muscle, spleen and pancreas. Moderate expression was seen in lung, liver and kidney.

The protein resides in the membrane. This Homo sapiens (Human) protein is Butyrophilin subfamily 2 member A1 (BTN2A1).